The following is a 225-amino-acid chain: Small ribosomal subunit protein uS7 (225 aa).

At Ser-2 the chain carries N-acetylserine. Thr-27 carries the phosphothreonine modification. Glycyl lysine isopeptide (Lys-Gly) (interchain with G-Cter in ubiquitin) cross-links involve residues Lys-45 and Lys-203.

Belongs to the universal ribosomal protein uS7 family. In terms of assembly, component of the small ribosomal subunit (SSU). Mature yeast ribosomes consist of a small (40S) and a large (60S) subunit. The 40S small subunit contains 1 molecule of ribosomal RNA (18S rRNA) and 33 different proteins (encoded by 57 genes). The large 60S subunit contains 3 rRNA molecules (25S, 5.8S and 5S rRNA) and 46 different proteins (encoded by 81 genes). Post-translationally, N-terminally acetylated by acetyltransferase NatA.

Its subcellular location is the cytoplasm. In terms of biological role, component of the ribosome, a large ribonucleoprotein complex responsible for the synthesis of proteins in the cell. The small ribosomal subunit (SSU) binds messenger RNAs (mRNAs) and translates the encoded message by selecting cognate aminoacyl-transfer RNA (tRNA) molecules. The large subunit (LSU) contains the ribosomal catalytic site termed the peptidyl transferase center (PTC), which catalyzes the formation of peptide bonds, thereby polymerizing the amino acids delivered by tRNAs into a polypeptide chain. The nascent polypeptides leave the ribosome through a tunnel in the LSU and interact with protein factors that function in enzymatic processing, targeting, and the membrane insertion of nascent chains at the exit of the ribosomal tunnel. The polypeptide is Small ribosomal subunit protein uS7 (Saccharomyces cerevisiae (strain ATCC 204508 / S288c) (Baker's yeast)).